Reading from the N-terminus, the 586-residue chain is Glutamate--tRNA ligase (586 aa).

The segment at 84–111 is disordered; sequence LTDIESEDTTDTYDLPSLPGVSDDEPTQ. A compositionally biased stretch (acidic residues) spans 85–94; sequence TDIESEDTTD. The 'HIGH' region signature appears at 119-129; that stretch reads PNPNGPWHIGH.

This sequence belongs to the class-I aminoacyl-tRNA synthetase family. Glutamate--tRNA ligase type 2 subfamily.

The protein localises to the cytoplasm. The enzyme catalyses tRNA(Glu) + L-glutamate + ATP = L-glutamyl-tRNA(Glu) + AMP + diphosphate. Functionally, catalyzes the attachment of glutamate to tRNA(Glu) in a two-step reaction: glutamate is first activated by ATP to form Glu-AMP and then transferred to the acceptor end of tRNA(Glu). This chain is Glutamate--tRNA ligase, found in Haloquadratum walsbyi (strain DSM 16790 / HBSQ001).